The sequence spans 244 residues: Probable transcriptional regulatory protein DNO_1179 (244 aa).

Belongs to the TACO1 family.

Its subcellular location is the cytoplasm. In Dichelobacter nodosus (strain VCS1703A), this protein is Probable transcriptional regulatory protein DNO_1179.